The following is a 290-amino-acid chain: Carbonic anhydrase-related protein (290 aa).

The segment at 1 to 26 is disordered; the sequence is MADLSFIEDTVAFPEKEEDEEEEEEG. A Phosphoserine modification is found at Ser-5. Residues 16–26 show a composition bias toward acidic residues; it reads KEEDEEEEEEG. An Alpha-carbonic anhydrase domain is found at 27–289; sequence VEWGYEEGVE…LSDRVIRAAF (263 aa). Catalysis depends on His-87, which acts as the Proton donor/acceptor. Residues His-118 and His-141 each contribute to the Zn(2+) site.

It belongs to the alpha-carbonic anhydrase family.

Functionally, does not have a carbonic anhydrase catalytic activity. The protein is Carbonic anhydrase-related protein (CA8) of Homo sapiens (Human).